We begin with the raw amino-acid sequence, 152 residues long: Endoribonuclease YbeY (152 aa).

Residues His-114, His-118, and His-124 each contribute to the Zn(2+) site.

It belongs to the endoribonuclease YbeY family. The cofactor is Zn(2+).

Its subcellular location is the cytoplasm. In terms of biological role, single strand-specific metallo-endoribonuclease involved in late-stage 70S ribosome quality control and in maturation of the 3' terminus of the 16S rRNA. The protein is Endoribonuclease YbeY of Wigglesworthia glossinidia brevipalpis.